The following is a 581-amino-acid chain: Chaperonin GroEL 1 (581 aa).

ATP is bound by residues 29 to 32 (TIGP), 86 to 90 (DGTTT), glycine 413, and aspartate 492. A disordered region spans residues 522-541 (PEPEAAGPGGPGADPMGGMG). Positions 528 to 541 (GPGGPGADPMGGMG) are enriched in gly residues.

This sequence belongs to the chaperonin (HSP60) family. In terms of assembly, forms a cylinder of 14 subunits composed of two heptameric rings stacked back-to-back. Interacts with the co-chaperonin GroES.

It is found in the cytoplasm. It carries out the reaction ATP + H2O + a folded polypeptide = ADP + phosphate + an unfolded polypeptide.. Functionally, together with its co-chaperonin GroES, plays an essential role in assisting protein folding. The GroEL-GroES system forms a nano-cage that allows encapsulation of the non-native substrate proteins and provides a physical environment optimized to promote and accelerate protein folding. This is Chaperonin GroEL 1 from Prochlorococcus marinus (strain MIT 9301).